The sequence spans 416 residues: Phosphatidylinositol 5-phosphate 4-kinase type-2 beta (416 aa).

Ser-2 is subject to N-acetylserine. Thr-8 carries the phosphothreonine modification. Ser-19 is subject to Phosphoserine. Residues 38–415 (ASEPILSVLM…RFNEFMSNIL (378 aa)) enclose the PIPK domain. Positions 64–70 (VMLMPDD) are required for interaction with PIP5K1A. 2 positions are modified to N6-acetyllysine: Lys-94 and Lys-150. Residues 202–204 (RNV) and Lys-214 each bind ATP. GTP contacts are provided by residues 203–204 (NV) and Lys-214. Residue Thr-322 is modified to Phosphothreonine. Residue Ser-326 is modified to Phosphoserine. Asp-369 lines the GTP pocket.

Homodimer. Binds TNFRSF1A. Interacts with PIP4K2A; the interaction suppresses ubiquitination by the SPOP/CUL3 complex. Probably interacts with PIP5K1A; the interaction inhibits PIP5K1A kinase activity. Ubiquitinated by the SPOP/CUL3 complex. Ubiquitination is stimulated by PtdIns5P levels. Post-translationally, phosphorylated on serine residues.

The protein localises to the endoplasmic reticulum membrane. It localises to the cell membrane. It is found in the nucleus. The protein resides in the cytoplasm. It carries out the reaction a 1,2-diacyl-sn-glycero-3-phospho-(1D-myo-inositol-5-phosphate) + ATP = a 1,2-diacyl-sn-glycero-3-phospho-(1D-myo-inositol-4,5-bisphosphate) + ADP + H(+). The enzyme catalyses 1,2-dihexadecanoyl-sn-glycero-3-phospho-(1D-myo-inositol-5-phosphate) + ATP = 1,2-dihexadecanoyl-sn-glycero-3-phospho-(1D-myo-inositol-4,5-bisphosphate) + ADP + H(+). The catalysed reaction is 1,2-dihexadecanoyl-sn-glycero-3-phospho-(1D-myo-inositol-5-phosphate) + GTP = 1,2-dihexadecanoyl-sn-glycero-3-phospho-(1D-myo-inositol-4,5-bisphosphate) + GDP + H(+). In terms of biological role, participates in the biosynthesis of phosphatidylinositol 4,5-bisphosphate. Preferentially utilizes GTP, rather than ATP, for PI(5)P phosphorylation and its activity reflects changes in direct proportion to the physiological GTP concentration. Its GTP-sensing activity is critical for metabolic adaptation. PIP4Ks negatively regulate insulin signaling through a catalytic-independent mechanism. They interact with PIP5Ks and suppress PIP5K-mediated PtdIns(4,5)P2 synthesis and insulin-dependent conversion to PtdIns(3,4,5)P3. In Rattus norvegicus (Rat), this protein is Phosphatidylinositol 5-phosphate 4-kinase type-2 beta.